The primary structure comprises 123 residues: Large ribosomal subunit protein uL29y (123 aa).

This sequence belongs to the universal ribosomal protein uL29 family.

The sequence is that of Large ribosomal subunit protein uL29y (RPL35B) from Arabidopsis thaliana (Mouse-ear cress).